A 66-amino-acid polypeptide reads, in one-letter code: uncharacterized protein (66 aa).

It belongs to the YeeT/YkfH/YpjJ family.

This is an uncharacterized protein from Escherichia coli (strain K12).